Reading from the N-terminus, the 146-residue chain is Ribonuclease H (146 aa).

Positions 1 to 143 (MQKKITIYTD…CDELARQAIQ (143 aa)) constitute an RNase H type-1 domain. Positions 10, 48, 70, and 135 each coordinate Mg(2+).

Belongs to the RNase H family. As to quaternary structure, monomer. It depends on Mg(2+) as a cofactor.

The protein localises to the cytoplasm. It catalyses the reaction Endonucleolytic cleavage to 5'-phosphomonoester.. Endonuclease that specifically degrades the RNA of RNA-DNA hybrids. This chain is Ribonuclease H, found in Chlorobium luteolum (strain DSM 273 / BCRC 81028 / 2530) (Pelodictyon luteolum).